Here is a 215-residue protein sequence, read N- to C-terminus: Protein-L-isoaspartate O-methyltransferase (215 aa).

Ser-62 is a catalytic residue.

It belongs to the methyltransferase superfamily. L-isoaspartyl/D-aspartyl protein methyltransferase family.

The protein resides in the cytoplasm. The catalysed reaction is [protein]-L-isoaspartate + S-adenosyl-L-methionine = [protein]-L-isoaspartate alpha-methyl ester + S-adenosyl-L-homocysteine. In terms of biological role, catalyzes the methyl esterification of L-isoaspartyl residues in peptides and proteins that result from spontaneous decomposition of normal L-aspartyl and L-asparaginyl residues. It plays a role in the repair and/or degradation of damaged proteins. This Bradyrhizobium sp. (strain ORS 278) protein is Protein-L-isoaspartate O-methyltransferase.